Reading from the N-terminus, the 358-residue chain is Peptide chain release factor 1 (358 aa).

N5-methylglutamine is present on Gln-233.

This sequence belongs to the prokaryotic/mitochondrial release factor family. Methylated by PrmC. Methylation increases the termination efficiency of RF1.

Its subcellular location is the cytoplasm. Functionally, peptide chain release factor 1 directs the termination of translation in response to the peptide chain termination codons UAG and UAA. The chain is Peptide chain release factor 1 from Listeria monocytogenes serovar 1/2a (strain ATCC BAA-679 / EGD-e).